Here is a 192-residue protein sequence, read N- to C-terminus: Rhomboid protease GlpG (192 aa).

The Cytoplasmic segment spans residues 1-10; it reads MKNFLAQQGK. The helical transmembrane segment at 11-31 threads the bilayer; it reads ITLILTALCVLIYLAQQLGFE. The Periplasmic portion of the chain corresponds to 32 to 57; sequence DDIMYLMHYPAYEEQDSEVWRYISHT. The chain crosses the membrane as a helical span at residues 58–78; that stretch reads LVHLSNLHILFNLSWFFIFGG. Over 79-82 the chain is Cytoplasmic; it reads MIER. A helical membrane pass occupies residues 83-103; it reads TFGSVKLLMLYVVASAITGYV. Topologically, residues 104–107 are periplasmic; that stretch reads QNYV. The helical transmembrane segment at 108–128 threads the bilayer; the sequence is SGPAFFGLSGVVYAVLGYVFI. S116 (nucleophile) is an active-site residue. At 129–141 the chain is on the cytoplasmic side; that stretch reads RDKLNHHLFDLPE. A helical transmembrane segment spans residues 142 to 162; sequence GFFTMLLVGIALGFISPLFGV. A topological domain (periplasmic) is located at residue E163. Residues 164–184 form a helical membrane-spanning segment; it reads MGNAAHISGLIVGLIWGFIDS. H169 is a catalytic residue. Topologically, residues 185 to 192 are cytoplasmic; sequence KLRKNSLE.

It belongs to the peptidase S54 family.

It is found in the cell inner membrane. The enzyme catalyses Cleaves type-1 transmembrane domains using a catalytic dyad composed of serine and histidine that are contributed by different transmembrane domains.. Its function is as follows. Rhomboid-type serine protease that catalyzes intramembrane proteolysis. This chain is Rhomboid protease GlpG (glpG), found in Haemophilus influenzae (strain ATCC 51907 / DSM 11121 / KW20 / Rd).